Here is a 105-residue protein sequence, read N- to C-terminus: UPF0145 protein CPS_2458 (105 aa).

It belongs to the UPF0145 family.

This Colwellia psychrerythraea (strain 34H / ATCC BAA-681) (Vibrio psychroerythus) protein is UPF0145 protein CPS_2458.